Reading from the N-terminus, the 445-residue chain is MLSKKFTLRSHKSSITYIYPHPTIPSNVFTADSSGLIINWDLTIRRPKSSWQAHTDTILTISTIENNNSNNNGDGDGDGDGDYYLLTHSRDNTIKIWDLLKFSCLLEIPCNSLNFTNIEIFNDLLFTPSSINSNNLDVYKINPKNWQIKRLIFDFDIYKLVNKNENENGNIIQEIGSDTITNNRNDFGIIMQMKIIKTITTTTTNTTTTTTKENQEENGGDFIIYLGFESGDIVGLQLILPPARILSTTNKSTNTNTNTNDKTIIYNQSAKFILKYHNSFHVPNPIICLSNLNSILISSSITNKLIIHYNPIIEIKNLKYSGIQSIVYFKKFHQLIFGYWNGYIQYDDILIKQNLPKLGTTNNNNINNNIDTDINQEQSKLTKKLTFMTILNESKQEISQTSTTTTTTSGGDKSKYSSLIKSKRNFKLPLLLVGYEDGSIVAYNI.

WD repeat units lie at residues 10–50 (SHKS…PKSS), 53–107 (AHTD…CLLE), and 406–445 (TTTS…AYNI).

Belongs to the WD repeat ASA1 family. Component of the ASTRA chromatin remodeling machinery complex.

It is found in the nucleus. Functionally, component of the ASTRA complex involved in chromatin remodeling. The protein is ASTRA-associated protein 1 (ASA1) of Candida dubliniensis (strain CD36 / ATCC MYA-646 / CBS 7987 / NCPF 3949 / NRRL Y-17841) (Yeast).